The sequence spans 466 residues: Methylenetetrahydrofolate--tRNA-(uracil-5-)-methyltransferase TrmFO (466 aa).

12–17 (GAGLAG) contributes to the FAD binding site.

It belongs to the MnmG family. TrmFO subfamily. It depends on FAD as a cofactor.

It localises to the cytoplasm. The catalysed reaction is uridine(54) in tRNA + (6R)-5,10-methylene-5,6,7,8-tetrahydrofolate + NADH + H(+) = 5-methyluridine(54) in tRNA + (6S)-5,6,7,8-tetrahydrofolate + NAD(+). It catalyses the reaction uridine(54) in tRNA + (6R)-5,10-methylene-5,6,7,8-tetrahydrofolate + NADPH + H(+) = 5-methyluridine(54) in tRNA + (6S)-5,6,7,8-tetrahydrofolate + NADP(+). In terms of biological role, catalyzes the folate-dependent formation of 5-methyl-uridine at position 54 (M-5-U54) in all tRNAs. The sequence is that of Methylenetetrahydrofolate--tRNA-(uracil-5-)-methyltransferase TrmFO from Synechococcus elongatus (strain ATCC 33912 / PCC 7942 / FACHB-805) (Anacystis nidulans R2).